Consider the following 573-residue polypeptide: SHC-transforming protein 2 (573 aa).

One can recognise a PID domain in the interval 125–307; that stretch reads LGPGVSYIVR…TGLEESAWGD (183 aa). The 92-residue stretch at 478–569 folds into the SH2 domain; it reads WYHGRMSRRA…ESELHLRGVV (92 aa).

As to quaternary structure, interacts with the Trk receptors in a phosphotyrosine-dependent manner and MEGF12. Once activated, binds to GRB2. In terms of processing, phosphorylated on tyrosine by the Trk receptors.

Functionally, signaling adapter that couples activated growth factor receptors to signaling pathway in neurons. Involved in the signal transduction pathways of neurotrophin-activated Trk receptors in cortical neurons. In Rattus norvegicus (Rat), this protein is SHC-transforming protein 2 (Shc2).